We begin with the raw amino-acid sequence, 356 residues long: MMLFFSSLYDWLPGVNVFRYITFRTVAAMLTSGLIVFLFGPSIISSLKVRQGKGQPIRADGPQTHFKKAGTPTMGGLMILSGVVISALLWGNLFNIYLWVSLFVMLFFGAIGFYDDYLKVTKQTDKGFSGKARLSLEFLVASIASFIILQVGSPGLALPFVKEYFINLGWFFIPFSACVVVGLGNAVNLTDGLDGLAIVPVMVASLSFALIAYLSGNINFADYLQIHYVSGVGELAVLLGAVFGAGLGFLWFNAPPAAIFMGDTGSLALGGLLGIVSVATKHEIVLIFIGGLFVLETLSVIIQVGWFKLTKKRVFLMAPIHHHFEKKGWTESQIVVRFWIIAIVLALIGLSTLKLR.

The next 10 helical transmembrane spans lie at 25-45, 70-90, 93-113, 138-158, 164-184, 195-215, 232-252, 258-278, 284-304, and 333-353; these read TVAA…SIIS, GTPT…ALLW, LFNI…AIGF, FLVA…GLAL, YFIN…VGLG, GLAI…AYLS, VGEL…FLWF, AIFM…IVSV, IVLI…IIQV, and QIVV…LSTL.

This sequence belongs to the glycosyltransferase 4 family. MraY subfamily. It depends on Mg(2+) as a cofactor.

It localises to the cell inner membrane. The enzyme catalyses UDP-N-acetyl-alpha-D-muramoyl-L-alanyl-gamma-D-glutamyl-meso-2,6-diaminopimeloyl-D-alanyl-D-alanine + di-trans,octa-cis-undecaprenyl phosphate = di-trans,octa-cis-undecaprenyl diphospho-N-acetyl-alpha-D-muramoyl-L-alanyl-D-glutamyl-meso-2,6-diaminopimeloyl-D-alanyl-D-alanine + UMP. Its pathway is cell wall biogenesis; peptidoglycan biosynthesis. In terms of biological role, catalyzes the initial step of the lipid cycle reactions in the biosynthesis of the cell wall peptidoglycan: transfers peptidoglycan precursor phospho-MurNAc-pentapeptide from UDP-MurNAc-pentapeptide onto the lipid carrier undecaprenyl phosphate, yielding undecaprenyl-pyrophosphoryl-MurNAc-pentapeptide, known as lipid I. This is Phospho-N-acetylmuramoyl-pentapeptide-transferase from Bartonella bacilliformis (strain ATCC 35685 / KC583 / Herrer 020/F12,63).